We begin with the raw amino-acid sequence, 1507 residues long: Lhr helicase/ probable uracil glycosylase (1507 aa).

The segment at Met-1–Ala-856 is lhr-Core. ATP contacts are provided by Phe-24, Gln-31, Lys-54, and Thr-55. A Helicase ATP-binding domain is found at Trp-35–Ile-226. SsDNA is bound by residues Arg-122, Arg-131, Thr-145, Ser-148, and Met-152. 2 residues coordinate ATP: Asp-170 and Glu-171. Residues Asp-170–His-173 carry the DEAH box motif. Residues Ser-253, Trp-255, and Arg-279 each coordinate ssDNA. One can recognise a Helicase C-terminal domain in the interval Asp-257–Ala-451. ATP is bound by residues Ile-377, Arg-394, and His-397. Positions 410, 518, 519, 528, 597, 600, and 777 each coordinate ssDNA. The WH domain stretch occupies residues Pro-436–Pro-529. The interval Asp-530 to Ala-856 is domain 4. Residues Phe-857–Arg-1507 are CTD.

It belongs to the Lhr helicase family. Monomer. Homooligomerizes, possibly a homotetramer. It depends on Ca(2+) as a cofactor.

The enzyme catalyses Couples ATP hydrolysis with the unwinding of duplex DNA by translocating in the 3'-5' direction.. It carries out the reaction ATP + H2O = ADP + phosphate + H(+). The catalysed reaction is Hydrolyzes single-stranded DNA or mismatched double-stranded DNA and polynucleotides, releasing free uracil.. A 3'-5' helicase involved in repair of at least 3 types of DNA cross-links, mitomycin C (MMC), cisplatin, and psoralen-UVA. Translocates 3'-to-5' on single-stranded (ss)DNA, unwinding any encountered duplex nucleic acid. A 3'-ssDNA loading strand of at least 15 nucleotides is required for helicase activity. An RNA:DNA hybrid with a 3'-ssDNA loading strand is an 8-fold better helicase substrate than 3'-tailed double-stranded (ds)DNA; substrates where the helicase loads on a 3'-ssRNA tail (DNA:RNA and RNA:RNA) are not unwound. Only (d)ATP is hydrolyzed by the protein, which has no ATPase activity in the absence of ssDNA or ssRNA. Arg-279 and Trp-597 are needed to couple ATP hydrolysis to mechanical work; a salt bridge between Arg-280 and Glu-550 closes a clamp around the ssDNA that is not large enough for dsDNA, while Ile-528 wedges between bases of the loading strand. Its function is as follows. Excises uracil residues from ssDNA. Uracil residues in DNA can arise as a result of misincorporation of dUMP residues by DNA polymerase or due to deamination of cytosine. The polypeptide is Lhr helicase/ probable uracil glycosylase (Mycolicibacterium smegmatis (strain ATCC 700084 / mc(2)155) (Mycobacterium smegmatis)).